We begin with the raw amino-acid sequence, 497 residues long: Vacuolar-processing enzyme beta-isozyme 1 (497 aa).

Residues 1–23 (MAARCWVWGFVVALLAVAAAADG) form the signal peptide. A glycan (N-linked (GlcNAc...) asparagine) is linked at Asn-153. Residue His-180 is part of the active site. The active-site Nucleophile is Cys-222. Cys-255 and Cys-269 are oxidised to a cystine. The N-linked (GlcNAc...) asparagine glycan is linked to Asn-340. 2 cysteine pairs are disulfide-bonded: Cys-432-Cys-462 and Cys-444-Cys-479.

This sequence belongs to the peptidase C13 family. Post-translationally, auto-catalytic activation.

It localises to the protein storage vacuole. It catalyses the reaction Hydrolysis of proteins and small molecule substrates at -Asn-|-Xaa- bonds.. Its function is as follows. Asparagine-specific endopeptidase that may be involved in processing of proteins targeted to vacuoles. Cysteine protease required for post-translational proteolysis of seed storage proteins in the protein storage vacuole (PSV) of developing seeds, by processing of proglutelin precursor to mature glutelin subunits, thus contributing to the formation of protein crystalline structures in PSV. This chain is Vacuolar-processing enzyme beta-isozyme 1, found in Oryza sativa subsp. indica (Rice).